The primary structure comprises 122 residues: uncharacterized protein (122 aa).

Belongs to the IIV-6 115R family.

This is an uncharacterized protein from Acheta domesticus (House cricket).